Consider the following 270-residue polypeptide: Sec-independent protein translocase protein TatC (270 aa).

6 consecutive transmembrane segments (helical) span residues 35–55, 93–113, 124–144, 176–196, 209–229, and 231–251; these read LILSVVFLAVGMVIAFTYRVQ, AFWAGLTLALPFIVWQIWAFI, WGLPFILGAGFAFAAGVVFGY, VVTFLVAFGVAFELPILAVIL, QGWRFALIGIMILAAVITPTP, and PANMALVAVPLYALYELGVVL.

It belongs to the TatC family. Forms a complex with TatA.

It is found in the cell membrane. In terms of biological role, part of the twin-arginine translocation (Tat) system that transports large folded proteins containing a characteristic twin-arginine motif in their signal peptide across membranes. This Deinococcus radiodurans (strain ATCC 13939 / DSM 20539 / JCM 16871 / CCUG 27074 / LMG 4051 / NBRC 15346 / NCIMB 9279 / VKM B-1422 / R1) protein is Sec-independent protein translocase protein TatC.